A 371-amino-acid chain; its full sequence is Peptide chain release factor 2 (371 aa).

Q253 is modified (N5-methylglutamine).

The protein belongs to the prokaryotic/mitochondrial release factor family. In terms of processing, methylated by PrmC. Methylation increases the termination efficiency of RF2.

The protein localises to the cytoplasm. Functionally, peptide chain release factor 2 directs the termination of translation in response to the peptide chain termination codons UGA and UAA. This is Peptide chain release factor 2 from Mycobacterium ulcerans (strain Agy99).